The sequence spans 156 residues: ATP synthase subunit b (156 aa).

A helical transmembrane segment spans residues 7–27; sequence LIGQTIAFIVFVWFCMKFVWP.

It belongs to the ATPase B chain family. F-type ATPases have 2 components, F(1) - the catalytic core - and F(0) - the membrane proton channel. F(1) has five subunits: alpha(3), beta(3), gamma(1), delta(1), epsilon(1). F(0) has three main subunits: a(1), b(2) and c(10-14). The alpha and beta chains form an alternating ring which encloses part of the gamma chain. F(1) is attached to F(0) by a central stalk formed by the gamma and epsilon chains, while a peripheral stalk is formed by the delta and b chains.

The protein resides in the cell inner membrane. F(1)F(0) ATP synthase produces ATP from ADP in the presence of a proton or sodium gradient. F-type ATPases consist of two structural domains, F(1) containing the extramembraneous catalytic core and F(0) containing the membrane proton channel, linked together by a central stalk and a peripheral stalk. During catalysis, ATP synthesis in the catalytic domain of F(1) is coupled via a rotary mechanism of the central stalk subunits to proton translocation. Functionally, component of the F(0) channel, it forms part of the peripheral stalk, linking F(1) to F(0). The chain is ATP synthase subunit b from Idiomarina loihiensis (strain ATCC BAA-735 / DSM 15497 / L2-TR).